A 69-amino-acid polypeptide reads, in one-letter code: MCCFDTLHIFYNIRSINPTLLNFINYFLLIVPQFIKSYRFIVSGNANCHGTWRDYCAQYTQRVGRPNFE.

Residues 13–35 (IRSINPTLLNFINYFLLIVPQFI) traverse the membrane as a helical segment.

It is found in the membrane. This is an uncharacterized protein from Saccharomyces cerevisiae (strain ATCC 204508 / S288c) (Baker's yeast).